Reading from the N-terminus, the 448-residue chain is tRNA(Ile)-lysidine synthase (448 aa).

29 to 34 provides a ligand contact to ATP; the sequence is SGGVDS.

Belongs to the tRNA(Ile)-lysidine synthase family.

The protein localises to the cytoplasm. It carries out the reaction cytidine(34) in tRNA(Ile2) + L-lysine + ATP = lysidine(34) in tRNA(Ile2) + AMP + diphosphate + H(+). In terms of biological role, ligates lysine onto the cytidine present at position 34 of the AUA codon-specific tRNA(Ile) that contains the anticodon CAU, in an ATP-dependent manner. Cytidine is converted to lysidine, thus changing the amino acid specificity of the tRNA from methionine to isoleucine. This is tRNA(Ile)-lysidine synthase from Azoarcus sp. (strain BH72).